The primary structure comprises 440 residues: Histidinol dehydrogenase homolog 2 (440 aa).

His-265 is a binding site for Zn(2+). Catalysis depends on proton acceptor residues Glu-333 and His-334. His-426 contributes to the Zn(2+) binding site.

This sequence belongs to the histidinol dehydrogenase family. Zn(2+) is required as a cofactor.

The sequence is that of Histidinol dehydrogenase homolog 2 from Mesorhizobium japonicum (strain LMG 29417 / CECT 9101 / MAFF 303099) (Mesorhizobium loti (strain MAFF 303099)).